Consider the following 783-residue polypeptide: Endonuclease MutS2 (783 aa).

328-335 contacts ATP; the sequence is GPNTGGKT. The Smr domain maps to 708-783; that stretch reads LDLRGKRYEE…GSGCTIATLG (76 aa).

Belongs to the DNA mismatch repair MutS family. MutS2 subfamily. In terms of assembly, homodimer. Binds to stalled ribosomes, contacting rRNA.

Functionally, endonuclease that is involved in the suppression of homologous recombination and thus may have a key role in the control of bacterial genetic diversity. Acts as a ribosome collision sensor, splitting the ribosome into its 2 subunits. Detects stalled/collided 70S ribosomes which it binds and splits by an ATP-hydrolysis driven conformational change. Acts upstream of the ribosome quality control system (RQC), a ribosome-associated complex that mediates the extraction of incompletely synthesized nascent chains from stalled ribosomes and their subsequent degradation. Probably generates substrates for RQC. This Streptococcus thermophilus (strain CNRZ 1066) protein is Endonuclease MutS2.